The sequence spans 217 residues: NADH dehydrogenase (ubiquinone) 23 kDa subunit (217 aa).

The transit peptide at 1–26 (MSLTMRIFTASRNGQRLFGSHGARLL) directs the protein to the mitochondrion. 4Fe-4S ferredoxin-type domains lie at 109-138 (RRYP…IEAE) and 148-177 (TRYD…EGPN). [4Fe-4S] cluster-binding residues include cysteine 118, cysteine 121, cysteine 124, cysteine 128, cysteine 157, cysteine 160, cysteine 163, and cysteine 167.

This sequence belongs to the complex I 23 kDa subunit family. Part of the mitochondrial membrane respiratory chain NADH dehydrogenase (Complex I). This is a component of the iron-sulfur (IP) fragment of the enzyme. It depends on [4Fe-4S] cluster as a cofactor. Expressed in muscles (at protein level).

The protein localises to the mitochondrion. The enzyme catalyses a ubiquinone + NADH + 5 H(+)(in) = a ubiquinol + NAD(+) + 4 H(+)(out). Core subunit of the mitochondrial membrane respiratory chain NADH dehydrogenase (Complex I) that is believed to belong to the minimal assembly required for catalysis. Complex I functions in the transfer of electrons from NADH to the respiratory chain. The immediate electron acceptor for the enzyme is believed to be ubiquinone. The sequence is that of NADH dehydrogenase (ubiquinone) 23 kDa subunit from Drosophila melanogaster (Fruit fly).